Consider the following 436-residue polypeptide: 5-methylthioadenosine/S-adenosylhomocysteine deaminase (436 aa).

Zn(2+)-binding residues include His66 and His68. Substrate contacts are provided by Glu95, Arg147, Arg161, and His187. His214 provides a ligand contact to Zn(2+). The substrate site is built by Glu217 and Asp303. Zn(2+) is bound at residue Asp303.

It belongs to the metallo-dependent hydrolases superfamily. MTA/SAH deaminase family. It depends on Zn(2+) as a cofactor.

The enzyme catalyses S-adenosyl-L-homocysteine + H2O + H(+) = S-inosyl-L-homocysteine + NH4(+). It catalyses the reaction S-methyl-5'-thioadenosine + H2O + H(+) = S-methyl-5'-thioinosine + NH4(+). Its function is as follows. Catalyzes the deamination of 5-methylthioadenosine and S-adenosyl-L-homocysteine into 5-methylthioinosine and S-inosyl-L-homocysteine, respectively. Is also able to deaminate adenosine. The chain is 5-methylthioadenosine/S-adenosylhomocysteine deaminase from Symbiobacterium thermophilum (strain DSM 24528 / JCM 14929 / IAM 14863 / T).